The chain runs to 212 residues: Tetraspanin-31-A (212 aa).

Residues 1–12 (MVCGGFTCSKNA) are Cytoplasmic-facing. The helical transmembrane segment at 13–33 (LCALNVVYMLVGLLLIGVAAW) threads the bilayer. Topologically, residues 34–44 (GKGFGIVSSIH) are extracellular. Residues 45–65 (IIGGVIAIGVFLLLIAIIGLI) form a helical membrane-spanning segment. Residues 66–72 (GAVSHHQ) lie on the Cytoplasmic side of the membrane. A helical transmembrane segment spans residues 73 to 93 (VMLFIYMVVLILVFIFQFIVS). Over 94-175 (CSCLAMNRSQ…MLNHADEALK (82 aa)) the chain is Extracellular. Asn100, Asn109, Asn117, and Asn134 each carry an N-linked (GlcNAc...) asparagine glycan. The chain crosses the membrane as a helical span at residues 176-196 (ILGGVGLFFSFTEILGVWLAF). Residues 197 to 212 (RFRNQKDPRANPSAFL) lie on the Cytoplasmic side of the membrane.

The protein belongs to the tetraspanin (TM4SF) family.

It localises to the membrane. In Xenopus laevis (African clawed frog), this protein is Tetraspanin-31-A (tspan31-a).